A 371-amino-acid chain; its full sequence is uncharacterized protein (371 aa).

Positions 20–250 (VTIRNVTKRY…PANIFVAGFI (231 aa)) constitute an ABC transporter domain. An ATP-binding site is contributed by 52–59 (GPSGCGKS).

This sequence belongs to the ABC transporter superfamily.

The protein localises to the cell inner membrane. Its function is as follows. Probably part of a binding-protein-dependent transport system y4oPQRS. This system probably transports a sugar-like molecule. Probably responsible for energy coupling to the transport system. This is an uncharacterized protein from Sinorhizobium fredii (strain NBRC 101917 / NGR234).